A 214-amino-acid chain; its full sequence is Large ribosomal subunit protein uL1 (214 aa).

It belongs to the universal ribosomal protein uL1 family. Part of the 50S ribosomal subunit.

Functionally, binds directly to 23S rRNA. Probably involved in E site tRNA release. In terms of biological role, protein L1 is also a translational repressor protein, it controls the translation of its operon by binding to its mRNA. The sequence is that of Large ribosomal subunit protein uL1 from Methanopyrus kandleri (strain AV19 / DSM 6324 / JCM 9639 / NBRC 100938).